A 213-amino-acid chain; its full sequence is Mite allergen Der f 7 (213 aa).

Residues 1-17 form the signal peptide; sequence MMKFLLIAAVAFVAVSA. N-linked (GlcNAc...) asparagine glycosylation is present at Asn-151.

The protein belongs to the mite group 7 allergen family.

It localises to the secreted. The polypeptide is Mite allergen Der f 7 (DERF7) (Dermatophagoides farinae (American house dust mite)).